The following is a 79-amino-acid chain: Dolichyl-diphosphooligosaccharide--protein glycosyltransferase subunit TMEM258 (79 aa).

The next 2 membrane-spanning stretches (helical) occupy residues 17 to 37 (VFPH…AWFF) and 55 to 75 (LISL…LLWV).

This sequence belongs to the OST5 family. In terms of assembly, component of the oligosaccharyltransferase (OST) complex.

It is found in the membrane. The protein localises to the endoplasmic reticulum. It localises to the cytoplasm. Its pathway is protein modification; protein glycosylation. In terms of biological role, subunit of the oligosaccharyl transferase (OST) complex that catalyzes the initial transfer of a defined glycan (Glc(3)Man(9)GlcNAc(2) in eukaryotes) from the lipid carrier dolichol-pyrophosphate to an asparagine residue within an Asn-X-Ser/Thr consensus motif in nascent polypeptide chains, the first step in protein N-glycosylation. N-glycosylation occurs cotranslationally and the complex associates with the Sec61 complex at the channel-forming translocon complex that mediates protein translocation across the endoplasmic reticulum (ER). All subunits are required for a maximal enzyme activity. The polypeptide is Dolichyl-diphosphooligosaccharide--protein glycosyltransferase subunit TMEM258 (Xenopus laevis (African clawed frog)).